The sequence spans 229 residues: Octanoyltransferase (229 aa).

Residues 30–223 (PDTPDTIWLV…QLQQRAQAHP (194 aa)) form the BPL/LPL catalytic domain. Substrate contacts are provided by residues 69–76 (RGGQITYH), 141–143 (ALG), and 154–156 (GVS). Residue Cys-172 is the Acyl-thioester intermediate of the active site.

Belongs to the LipB family.

Its subcellular location is the cytoplasm. The enzyme catalyses octanoyl-[ACP] + L-lysyl-[protein] = N(6)-octanoyl-L-lysyl-[protein] + holo-[ACP] + H(+). It participates in protein modification; protein lipoylation via endogenous pathway; protein N(6)-(lipoyl)lysine from octanoyl-[acyl-carrier-protein]: step 1/2. Catalyzes the transfer of endogenously produced octanoic acid from octanoyl-acyl-carrier-protein onto the lipoyl domains of lipoate-dependent enzymes. Lipoyl-ACP can also act as a substrate although octanoyl-ACP is likely to be the physiological substrate. In Ralstonia pickettii (strain 12J), this protein is Octanoyltransferase.